The chain runs to 138 residues: Large ribosomal subunit protein uL16 (138 aa).

Over residues 1-13 the composition is skewed to basic residues; it reads MLQPARRKFRKEQ. Positions 1–22 are disordered; sequence MLQPARRKFRKEQKGRNTGVAT.

It belongs to the universal ribosomal protein uL16 family. Part of the 50S ribosomal subunit.

Binds 23S rRNA and is also seen to make contacts with the A and possibly P site tRNAs. This is Large ribosomal subunit protein uL16 from Acidovorax ebreus (strain TPSY) (Diaphorobacter sp. (strain TPSY)).